The sequence spans 318 residues: NADH-ubiquinone oxidoreductase chain 1 (318 aa).

Helical transmembrane passes span 2–22, 69–89, 102–122, 146–166, 171–191, 222–242, 253–273, and 294–314; these read FLIN…FLTL, FLFT…WAPL, LLFI…SGWA, MTTI…TAFA, HLWL…STLA, LFFM…VILF, EIST…FLWV, and LPLT…LACI.

Belongs to the complex I subunit 1 family.

The protein resides in the mitochondrion inner membrane. It carries out the reaction a ubiquinone + NADH + 5 H(+)(in) = a ubiquinol + NAD(+) + 4 H(+)(out). Functionally, core subunit of the mitochondrial membrane respiratory chain NADH dehydrogenase (Complex I) that is believed to belong to the minimal assembly required for catalysis. Complex I functions in the transfer of electrons from NADH to the respiratory chain. The immediate electron acceptor for the enzyme is believed to be ubiquinone. The polypeptide is NADH-ubiquinone oxidoreductase chain 1 (MT-ND1) (Mammuthus primigenius (Siberian woolly mammoth)).